The chain runs to 633 residues: Pescadillo homolog (633 aa).

In terms of domain architecture, BRCT spans 321–414 (RLRTLFKGLK…QLLPTNKYFL (94 aa)). 2 disordered regions span residues 450–470 (HAQS…DTVE) and 490–567 (KKYG…LQAR). A phosphoserine mark is found at serine 453 and serine 457. 2 stretches are compositionally biased toward acidic residues: residues 454–470 (EDES…DTVE) and 498–526 (VNED…EELD). Over residues 527–538 (EKEKRLLEEKQK) the composition is skewed to basic and acidic residues. Residues 545-554 (KVHKVNKRQV) show a composition bias toward basic residues. Over residues 555-564 (HKAEVDEHRL) the composition is skewed to basic and acidic residues. The stretch at 593–626 (LLRKKRRTIETDAKEAKKLAKREARKAAAAAAAA) forms a coiled coil.

The protein belongs to the pescadillo family.

It is found in the nucleus. It localises to the nucleolus. The protein resides in the nucleoplasm. Functionally, required for maturation of ribosomal RNAs and formation of the large ribosomal subunit. The sequence is that of Pescadillo homolog from Drosophila virilis (Fruit fly).